A 248-amino-acid polypeptide reads, in one-letter code: MVRYKATISYDGTLFSGFQRQPNARSIQEEIEKTLLRLNSGIPVTVHGAGRTDAGVHAYGQVIHFDLPQERDPEKLRFGLDTQCPDDIDIVSIELVSEEFHARYSKHIKTYEFLVDAGRPKNPMMRNYAIHYPYPLSLALMQEAAMELVGTHDFTGFTASGTSVENKVRTITQASVSIDEKTGFYVFAFSGNGFLYKQVRNMVGTLLKIGNGRMPVSQAKTVLESRDRNLAGPTVAGNGLYLKEIRYE.

Catalysis depends on Asp53, which acts as the Nucleophile. Tyr111 lines the substrate pocket.

It belongs to the tRNA pseudouridine synthase TruA family. Homodimer.

It catalyses the reaction uridine(38/39/40) in tRNA = pseudouridine(38/39/40) in tRNA. Functionally, formation of pseudouridine at positions 38, 39 and 40 in the anticodon stem and loop of transfer RNAs. This chain is tRNA pseudouridine synthase A, found in Streptococcus thermophilus (strain ATCC BAA-491 / LMD-9).